The primary structure comprises 364 residues: Adenosine 3'-phospho 5'-phosphosulfate transporter 2 (364 aa).

The next 10 membrane-spanning stretches (helical) occupy residues 39 to 59, 74 to 94, 106 to 126, 131 to 151, 157 to 177, 187 to 206, 231 to 251, 257 to 277, 281 to 301, and 310 to 330; these read WLQF…YGYM, WTLT…ECII, IYGV…ASVG, PTQV…GILI, GWID…FTLA, SRGY…IGNI, VFIF…PFFL, TFGY…VVLT, VFGA…TIIL, and FTIE…LNLY.

Belongs to the nucleotide-sugar transporter family. SLC35B subfamily.

The protein resides in the golgi apparatus membrane. Its function is as follows. Mediates the transport of adenosine 3'-phospho 5'-phosphosulfate (PAPS), from cytosol into Golgi. PAPS is a universal sulfuryl donor for sulfation events that take place in the Golgi. This Caenorhabditis elegans protein is Adenosine 3'-phospho 5'-phosphosulfate transporter 2 (pst-2).